A 312-amino-acid chain; its full sequence is Aspartate carbamoyltransferase catalytic subunit (312 aa).

Carbamoyl phosphate contacts are provided by arginine 57 and threonine 58. Residue lysine 85 participates in L-aspartate binding. Positions 107, 135, and 138 each coordinate carbamoyl phosphate. Arginine 168 and arginine 222 together coordinate L-aspartate. Positions 264 and 265 each coordinate carbamoyl phosphate.

The protein belongs to the aspartate/ornithine carbamoyltransferase superfamily. ATCase family. In terms of assembly, heterododecamer (2C3:3R2) of six catalytic PyrB chains organized as two trimers (C3), and six regulatory PyrI chains organized as three dimers (R2).

It carries out the reaction carbamoyl phosphate + L-aspartate = N-carbamoyl-L-aspartate + phosphate + H(+). It participates in pyrimidine metabolism; UMP biosynthesis via de novo pathway; (S)-dihydroorotate from bicarbonate: step 2/3. Its function is as follows. Catalyzes the condensation of carbamoyl phosphate and aspartate to form carbamoyl aspartate and inorganic phosphate, the committed step in the de novo pyrimidine nucleotide biosynthesis pathway. The chain is Aspartate carbamoyltransferase catalytic subunit from Carboxydothermus hydrogenoformans (strain ATCC BAA-161 / DSM 6008 / Z-2901).